An 884-amino-acid chain; its full sequence is Alanine--tRNA ligase (884 aa).

His-572, His-576, Cys-673, and His-677 together coordinate Zn(2+).

This sequence belongs to the class-II aminoacyl-tRNA synthetase family. The cofactor is Zn(2+).

Its subcellular location is the cytoplasm. It carries out the reaction tRNA(Ala) + L-alanine + ATP = L-alanyl-tRNA(Ala) + AMP + diphosphate. Functionally, catalyzes the attachment of alanine to tRNA(Ala) in a two-step reaction: alanine is first activated by ATP to form Ala-AMP and then transferred to the acceptor end of tRNA(Ala). Also edits incorrectly charged Ser-tRNA(Ala) and Gly-tRNA(Ala) via its editing domain. The chain is Alanine--tRNA ligase from Xylella fastidiosa (strain M23).